Consider the following 104-residue polypeptide: Intracellular chorismate mutase (104 aa).

Positions 23–104 (AVPEIDDLRR…LRLGRGRLGY (82 aa)) constitute a Chorismate mutase domain. R59, V68, and E72 together coordinate chorismate.

In terms of assembly, homodimer. Probably interacts with AroG (MSMEG_4244).

Its subcellular location is the cytoplasm. It carries out the reaction chorismate = prephenate. It participates in metabolic intermediate biosynthesis; prephenate biosynthesis; prephenate from chorismate: step 1/1. Its activity is regulated as follows. The formation of the complex with AroG activates the chorismate mutase activity. Functionally, catalyzes the Claisen rearrangement of chorismate to prephenate. Probably involved in the aromatic amino acid biosynthesis. In Mycolicibacterium smegmatis (strain ATCC 700084 / mc(2)155) (Mycobacterium smegmatis), this protein is Intracellular chorismate mutase.